A 437-amino-acid chain; its full sequence is Anhydromevalonate phosphate decarboxylase (437 aa).

Mn(2+) contacts are provided by Asn-136 and Glu-199. The active-site Proton acceptor is the Asp-247.

This sequence belongs to the UbiD family. The cofactor is prenylated FMN. Mn(2+) is required as a cofactor.

The enzyme catalyses (2E)-3-methyl-5-phosphooxypent-2-enoate + H(+) = isopentenyl phosphate + CO2. Its pathway is isoprenoid biosynthesis; isopentenyl diphosphate biosynthesis via mevalonate pathway. Catalyzes the conversion of trans-anhydromevalonate 5-phosphate (tAHMP) into isopentenyl phosphate. Involved in the archaeal mevalonate (MVA) pathway, which provides fundamental precursors for isoprenoid biosynthesis, such as isopentenyl diphosphate (IPP) and dimethylallyl diphosphate (DMAPP). The chain is Anhydromevalonate phosphate decarboxylase from Aeropyrum pernix (strain ATCC 700893 / DSM 11879 / JCM 9820 / NBRC 100138 / K1).